The chain runs to 271 residues: Putative two-component membrane permease complex subunit SMU_746c (271 aa).

Helical transmembrane passes span 34-54 (LAYI…TIWM) and 70-90 (FFSP…PTVP).

The protein belongs to the UPF0703 family. Interacts with SMU_747c.

It localises to the cell membrane. In terms of biological role, could be part of a two-component membrane permease system responsible for amino acid transport under low pH. Involved in acidogenesis, biofilm formation and low-pH survival. The protein is Putative two-component membrane permease complex subunit SMU_746c of Streptococcus mutans serotype c (strain ATCC 700610 / UA159).